Consider the following 221-residue polypeptide: Proteasome subunit beta type-1 (221 aa).

It belongs to the peptidase T1B family. The 26S proteasome consists of a 20S proteasome core and two 19S regulatory subunits. The 20S proteasome core is composed of 28 subunits that are arranged in four stacked rings, resulting in a barrel-shaped structure. The two end rings are each formed by seven alpha subunits, and the two central rings are each formed by seven beta subunits. The catalytic chamber with the active sites is on the inside of the barrel.

It is found in the cytoplasm. It localises to the nucleus. Functionally, non-catalytic component of the proteasome, a multicatalytic proteinase complex which is characterized by its ability to cleave peptides with Arg, Phe, Tyr, Leu, and Glu adjacent to the leaving group at neutral or slightly basic pH. The proteasome has an ATP-dependent proteolytic activity. In Oryza sativa subsp. japonica (Rice), this protein is Proteasome subunit beta type-1 (PBF1).